We begin with the raw amino-acid sequence, 203 residues long: Translation initiation factor IF-3 (203 aa).

A compositionally biased stretch (basic and acidic residues) spans 172–182 (EAPKNEKKTKE). A disordered region spans residues 172–203 (EAPKNEKKTKENNPPFNRINLMKGENHAKNED).

The protein belongs to the IF-3 family. As to quaternary structure, monomer.

It localises to the cytoplasm. IF-3 binds to the 30S ribosomal subunit and shifts the equilibrium between 70S ribosomes and their 50S and 30S subunits in favor of the free subunits, thus enhancing the availability of 30S subunits on which protein synthesis initiation begins. The chain is Translation initiation factor IF-3 from Helicobacter pylori (strain J99 / ATCC 700824) (Campylobacter pylori J99).